We begin with the raw amino-acid sequence, 673 residues long: Xaa-Pro aminopeptidase 2 (673 aa).

The N-terminal stretch at 1 to 21 (MAQACWGCYPWLVLICACAWG) is a signal peptide. 3 N-linked (GlcNAc...) asparagine glycosylation sites follow: Asn-34, Asn-48, and Asn-64. Residue Arg-115 coordinates substrate. Asn-277, Asn-290, and Asn-294 each carry an N-linked (GlcNAc...) asparagine glycan. His-429 serves as a coordination point for substrate. Asp-449 contributes to the Mn(2+) binding site. Positions 449, 460, and 523 each coordinate Zn(2+). 3 residues coordinate substrate: His-523, His-532, and Glu-554. The Zn(2+) site is built by Glu-554 and Glu-568. Ala-649 carries the GPI-anchor amidated alanine lipid modification. The propeptide at 650-673 (RAAPTTSLGSLMTVSALAILGWSV) is removed in mature form.

Belongs to the peptidase M24B family. In terms of assembly, homotrimer. Requires Zn(2+) as cofactor. In terms of processing, N-glycosylated. As to expression, kidney.

The protein localises to the cell membrane. The catalysed reaction is Release of any N-terminal amino acid, including proline, that is linked to proline, even from a dipeptide or tripeptide.. Inhibited by apstatin and the metal ion chelator EDTA. Potently inhibited by the converting enzyme inhibitors cilazaprilat; enalaprilat; L155,212; ramiprilat and YS 980. Also inhibited to a lesser extent by indolaprilat; quinaprilat; spiraprilat; captopril and zofenoprilat. Membrane-bound metalloprotease which catalyzes the removal of a penultimate prolyl residue from the N-termini of peptides, such as Arg-Pro-Pro. May play a role in the metabolism of the vasodilator bradykinin. The polypeptide is Xaa-Pro aminopeptidase 2 (XPNPEP2) (Sus scrofa (Pig)).